The following is a 419-amino-acid chain: MLNHFPGHCSNNIFCFPPIESETKSGKKASWIICVQVVQHNTIIPITDEMFSTDVKDAVAEIFTKFFVEEGTVRISKMTRVTEGKNLGKKNATTVVHQAFKDALSKYNRHARQKRGAHTNTGMIPPMLVKYFNIIPKTFFEEETDPIVQRKRNGVRAVACQQGDGSILLYSRTEKEFLGLDNIKKELKQLYLFIDVRVYLDGELYLHRKPLQWIAGQANAKTDSSELHFYVFDCFWSDQLQMPSNKRQQLLTNIFKQKEDLTFIHQVENFSVKNEDEALRLKAQFIKEGYEGAIVRNANGPYEPGYNNYHSAHLAKLKPLLDAEFILVDYTQGKKGKDLGAILWVCELPNKKRFVVTPKHLTYADRYALFQKLTPALFKKHLYGKELTVEYAELSPKTGIPLQARAVGFREPINVLEII.

The interval 1 to 120 (MLNHFPGHCS…ARQKRGAHTN (120 aa)) is NTD. The AD domain stretch occupies residues 121–317 (TGMIPPMLVK…NYHSAHLAKL (197 aa)). Lys151 functions as the N6-AMP-lysine intermediate in the catalytic mechanism. Residues 318 to 419 (KPLLDAEFIL…REPINVLEII (102 aa)) are OB domain.

It belongs to the ATP-dependent DNA ligase family.

Its subcellular location is the virion. The enzyme catalyses ATP + (deoxyribonucleotide)n-3'-hydroxyl + 5'-phospho-(deoxyribonucleotide)m = (deoxyribonucleotide)n+m + AMP + diphosphate.. Very low-fidelity DNA ligase that seals nicks in double-stranded DNA during DNA repair. Together with the viral repair DNA polymerase X, fills the single nucleotide gaps generated by the AP endonuclease. It is not essential for viral replication and recombination. Displays a very low adenylation activity towards DNA with 3'-dideoxy- or 3'-amino-terminated nicks compared to regular nick DNA. The chain is DNA ligase from Ornithodoros (relapsing fever ticks).